We begin with the raw amino-acid sequence, 267 residues long: Cysteine protease avirulence protein AvrPphB (267 aa).

A lipid anchor (N-myristoyl glycine; by host) is attached at G63. Active-site residues include C98, H212, and D227.

The protein belongs to the peptidase C58 family. In terms of assembly, in infected plant cells, the 28 kDa product interacts with PBS1. Post-translationally, autocleaved. This function is essential for myristoylation in infected plant cell and for eliciting the plant hypersensitive response. In terms of processing, myristoylation of 28 kDa product in infected plant cells; it mediates the localization to membranes.

It is found in the secreted. It localises to the host membrane. Its function is as follows. Cysteine protease avirulence protein, which is essential during infection of plant cells from cultivar-specific of beans and Arabidopsis thaliana. The autocleavage of the protein is required for virulence function. May act by affecting the plant defense system. In plants lacking R3 or RPS5 resistance genes, it probably impairs the plant defense system and leads to the bacteria multiplication. In contrast, in plants containing the R3 or RPS5 protein, it is unable to induce disease symptoms, explaining its avirulence name. The 7 kDa product is required for the type-III translocation from Pseudomonas strains to the plant, but are partially dispensable for effector recognition following in planta expression. In infected plants, it acts by cleaving the PBS1 protein, which leads to resistance or disease, depending on the presence or absence of RPS5, respectively. Targets the Arabidopsis kinases PBS1, BIK1, PBL1, PBL2, PBL3, PBL5, PBL7, PBL9 and PBL11 for cleavage in vitro. Can block recognition of AvrB avirulence factor by plant cells by cleaving Arabidopsis RIPK kinase and suppressing Arabidopsis RPM1 activation. Cannot block AvrRpm1-induced activation of RPM1. The protein is Cysteine protease avirulence protein AvrPphB (avrPph3) of Pseudomonas savastanoi pv. phaseolicola (Pseudomonas syringae pv. phaseolicola).